A 507-amino-acid chain; its full sequence is uncharacterized protein (507 aa).

The next 12 membrane-spanning stretches (helical) occupy residues 46-66 (WIVL…WIGY), 83-103 (AWLS…AMWA), 112-132 (AVLI…ISSL), 141-161 (FPIC…IMFL), 181-201 (IGVM…PAIV), 207-227 (VIWL…IATF), 263-283 (IILL…YTVM), 299-319 (VCAA…SIFV), 328-348 (TLKI…QLTL), 354-374 (VILG…YPIG), 389-409 (TSTG…VFIM), and 442-462 (MSIM…VVLF). Basic and acidic residues predominate over residues 477-493 (ATADKAKELSNQNKDRI). The segment at 477–507 (ATADKAKELSNQNKDRITLQAESAVEPLQKK) is disordered.

The protein resides in the membrane. This is an uncharacterized protein from Caenorhabditis elegans.